The following is a 236-amino-acid chain: Adenylate dimethylallyltransferase (236 aa).

It belongs to the isopentenyl transferase family.

The enzyme catalyses dimethylallyl diphosphate + AMP = N(6)-(dimethylallyl)adenosine 5'-phosphate + diphosphate. In terms of biological role, transfers dimethylallyl groups to AMP as part of the biosynthesis of cytokinin phytohormones. In Pantoea agglomerans pv. gypsophilae (Erwinia herbicola), this protein is Adenylate dimethylallyltransferase (ipt).